The following is a 462-amino-acid chain: Keratin, type I cytoskeletal 28 (462 aa).

A disordered region spans residues 1 to 26 (MSLRFSGGSRHVGIQSGSLRPPSGGA). Residues 1-83 (MSLRFSGGSR…GSEGGLLSGN (83 aa)) form a head region. The interval 84–119 (EKVTMQNLNNRLASYLDNVKALEEANSELERKIKTW) is coil 1A. Positions 84-399 (EKVTMQNLNN…RLIDGDENSC (316 aa)) constitute an IF rod domain. A linker 1 region spans residues 120–141 (HEKYGPGSCRGLDRDYSKYHLT). The coil 1B stretch occupies residues 142–233 (IEDLKSKIIS…KNHEEEMKVL (92 aa)). The tract at residues 234-256 (QCAAGGNVNVEMNAAPGVDLTVL) is linker 12. Residues 257–395 (LNNMRAEYEA…ETYCRLIDGD (139 aa)) are coil 2. The segment at 396-462 (ENSCSVSKGF…NGKAEQRVPF (67 aa)) is tail.

It belongs to the intermediate filament family. Heterotetramer of two type I and two type II keratins. In terms of tissue distribution, in the hair follicle and bulb, uniformly expressed in all three layers of the inner root sheath (the Henle layer, the Huxley layer and the cuticle) and observed in matrix cells (at protein level).

The protein resides in the cytoplasm. Essential for the proper assembly of types I and II keratin protein complexes and the formation of keratin intermediate filaments in the inner root sheath (irs). The protein is Keratin, type I cytoskeletal 28 of Mus musculus (Mouse).